We begin with the raw amino-acid sequence, 496 residues long: FAD-linked oxidoreductase AFUA_1G00980 (496 aa).

The signal sequence occupies residues 1-21 (MRRATLIPLAIWVAGAAAAAA). Residues Asn49, Asn122, Asn205, Asn258, Asn344, Asn351, Asn371, and Asn382 are each glycosylated (N-linked (GlcNAc...) asparagine). Residues 64–243 (MAPTYAVSVR…VEAVYQVTDL (180 aa)) enclose the FAD-binding PCMH-type domain.

It belongs to the oxygen-dependent FAD-linked oxidoreductase family. FAD is required as a cofactor.

FAD-linked oxidoreductase; part of the gene cluster that mediates the biosynthesis of fumigermin that inhibits germination of spores of the inducing S.rapamycinicus, and thus helps the fungus to defend resources in the shared habitat against a bacterial competitor. The partially reducing polyketide synthase fngA alone is sufficient for the production of fumigermin. FgnA catalyzes the condensation of 3 malonyl-CoA units to an acetyl-CoA starter, and 3 methylations to yield fumigermin. It is remarkable that the five cluster genes including fgnA are conserved in distantly related fungi, supporting the assumption of a fumigermin cluster; it is thus possible that originally all five genes were functional, but that the genes encoding tailoring enzymes became inactive from mutations, similar to the case of the fgnA gene in strains A1163 and Af293. This is FAD-linked oxidoreductase AFUA_1G00980 from Aspergillus fumigatus (strain ATCC MYA-4609 / CBS 101355 / FGSC A1100 / Af293) (Neosartorya fumigata).